A 1574-amino-acid chain; its full sequence is Plexin-C1 (1574 aa).

The first 34 residues, 1 to 34 (MEVSRRKTPPRPPYPAAPLPLIAYLLALAAPARG), serve as a signal peptide directing secretion. The Sema domain maps to 35–452 (ADEPVWRSEQ…AGKEVRRIPV (418 aa)). Topologically, residues 35–950 (ADEPVWRSEQ…YVEQESVPST (916 aa)) are extracellular. The cysteines at positions 64 and 87 are disulfide-linked. Asparagine 86, asparagine 143, and asparagine 149 each carry an N-linked (GlcNAc...) asparagine glycan. Residues cysteine 156 and cysteine 194 are joined by a disulfide bond. The N-linked (GlcNAc...) asparagine glycan is linked to asparagine 252. A disulfide bridge links cysteine 283 with cysteine 329. 2 N-linked (GlcNAc...) asparagine glycosylation sites follow: asparagine 386 and asparagine 407. 4 disulfide bridges follow: cysteine 455–cysteine 472, cysteine 461–cysteine 506, cysteine 464–cysteine 481, and cysteine 475–cysteine 487. N-linked (GlcNAc...) asparagine glycosylation is found at asparagine 694, asparagine 773, and asparagine 802. The helical transmembrane segment at 951–971 (WYFLIALPILLAIVIVVAVVV) threads the bilayer. Residues 972-1574 (TRYKSKELSR…FDEKKKCKWM (603 aa)) lie on the Cytoplasmic side of the membrane. Serine 984 is subject to Phosphoserine.

This sequence belongs to the plexin family. In terms of assembly, monomer. Homodimer. Interacts with SEMA7A. In terms of tissue distribution, detected on dendritic cells, skin Langerhans cells and neutrophils (at protein level).

Its subcellular location is the membrane. Receptor for SEMA7A, for vaccinia virus semaphorin A39R and for herpesvirus Sema protein. Binding of semaphorins triggers cellular responses leading to the rearrangement of the cytoskeleton and to secretion of IL6 and IL8. This is Plexin-C1 (Plxnc1) from Mus musculus (Mouse).